A 132-amino-acid polypeptide reads, in one-letter code: uncharacterized protein (132 aa).

A helical transmembrane segment spans residues 105–125 (VHGYVVFWLSILCILIIIFVY).

The protein localises to the membrane. This is an uncharacterized protein from Methanocaldococcus jannaschii (strain ATCC 43067 / DSM 2661 / JAL-1 / JCM 10045 / NBRC 100440) (Methanococcus jannaschii).